The sequence spans 485 residues: dTDP-4-amino-4,6-dideoxy-D-glucose ammonia-lyase (485 aa).

Positions 141, 145, and 148 each coordinate [4Fe-4S] cluster.

It belongs to the radical SAM superfamily. DesII family. Monomer. Requires [4Fe-4S] cluster as cofactor.

It catalyses the reaction dTDP-4-amino-4,6-dideoxy-alpha-D-glucose + AH2 + S-adenosyl-L-methionine = dTDP-3-dehydro-4,6-dideoxy-alpha-D-glucose + 5'-deoxyadenosine + L-methionine + A + NH4(+) + H(+). In terms of biological role, involved in the biosynthesis of dTDP-alpha-D-desosamine, a sugar found in several bacterial macrolide antibiotics. Catalyzes the SAM-dependent deamination of dTDP-4-amino-4,6-deoxyglucose (dTDP-viosamine) to yield dTDP-3-keto-4,6-deoxyglucose. It can also catalyze the oxidative dehydrogenation of the non-physiological substrate dTDP-D-quinovose to dTDP-3-keto-6-deoxy-d-glucose. It can also deaminate dTDP-3-amino-3,6-deoxyglucose. This is dTDP-4-amino-4,6-dideoxy-D-glucose ammonia-lyase from Streptomyces venezuelae.